We begin with the raw amino-acid sequence, 280 residues long: uncharacterized protein (280 aa).

The first 21 residues, 1–21 (MRPAIKVGLSTASVYPLRAEA), serve as a signal peptide directing secretion.

This sequence to M.leprae ML2432 and S.coelicolor SCO3347.

This is an uncharacterized protein from Mycobacterium tuberculosis (strain CDC 1551 / Oshkosh).